We begin with the raw amino-acid sequence, 456 residues long: Bifunctional protein GlmU (456 aa).

The pyrophosphorylase stretch occupies residues 1-229 (MLNNAMSVVI…LSEVEGVNNR (229 aa)). Residues 11 to 14 (LAAG), K25, Q76, 81 to 82 (GT), 103 to 105 (YGD), G140, E154, N169, and N227 contribute to the UDP-N-acetyl-alpha-D-glucosamine site. D105 lines the Mg(2+) pocket. N227 contributes to the Mg(2+) binding site. Positions 230–250 (LQLSRLERVYQSEQAEKLLLA) are linker. An N-acetyltransferase region spans residues 251–456 (GVMLRDPARF…EGWRRPVKKK (206 aa)). UDP-N-acetyl-alpha-D-glucosamine is bound by residues R333 and K351. Catalysis depends on H363, which acts as the Proton acceptor. UDP-N-acetyl-alpha-D-glucosamine contacts are provided by Y366 and N377. Acetyl-CoA is bound by residues A380, 386–387 (NY), S405, A423, and R440.

The protein in the N-terminal section; belongs to the N-acetylglucosamine-1-phosphate uridyltransferase family. It in the C-terminal section; belongs to the transferase hexapeptide repeat family. Homotrimer. Mg(2+) serves as cofactor.

Its subcellular location is the cytoplasm. It carries out the reaction alpha-D-glucosamine 1-phosphate + acetyl-CoA = N-acetyl-alpha-D-glucosamine 1-phosphate + CoA + H(+). The catalysed reaction is N-acetyl-alpha-D-glucosamine 1-phosphate + UTP + H(+) = UDP-N-acetyl-alpha-D-glucosamine + diphosphate. The protein operates within nucleotide-sugar biosynthesis; UDP-N-acetyl-alpha-D-glucosamine biosynthesis; N-acetyl-alpha-D-glucosamine 1-phosphate from alpha-D-glucosamine 6-phosphate (route II): step 2/2. It functions in the pathway nucleotide-sugar biosynthesis; UDP-N-acetyl-alpha-D-glucosamine biosynthesis; UDP-N-acetyl-alpha-D-glucosamine from N-acetyl-alpha-D-glucosamine 1-phosphate: step 1/1. Its pathway is bacterial outer membrane biogenesis; LPS lipid A biosynthesis. Its function is as follows. Catalyzes the last two sequential reactions in the de novo biosynthetic pathway for UDP-N-acetylglucosamine (UDP-GlcNAc). The C-terminal domain catalyzes the transfer of acetyl group from acetyl coenzyme A to glucosamine-1-phosphate (GlcN-1-P) to produce N-acetylglucosamine-1-phosphate (GlcNAc-1-P), which is converted into UDP-GlcNAc by the transfer of uridine 5-monophosphate (from uridine 5-triphosphate), a reaction catalyzed by the N-terminal domain. The protein is Bifunctional protein GlmU of Shigella sonnei (strain Ss046).